Consider the following 309-residue polypeptide: Olfactory receptor 5H17 (309 aa).

At 1–28 (MEKKNETLWTEFVLTGLTCLPQWKPLLF) the chain is on the extracellular side. Residue Asn-5 is glycosylated (N-linked (GlcNAc...) asparagine). A helical transmembrane segment spans residues 29 to 49 (LVFLVIYFMTIVGNLGLITLI). The Cytoplasmic segment spans residues 50 to 56 (WNDPHLH). The chain crosses the membrane as a helical span at residues 57-77 (IPMYLFLSNLAFVDTWLSSTV). The Extracellular portion of the chain corresponds to 78–93 (TPRMLFNLLDKGKVIS). The chain crosses the membrane as a helical span at residues 94 to 114 (VAECKTQFFSFAISVTTECFL). Cys-97 and Cys-189 are joined by a disulfide. Residues 115-144 (LAAMAYDRYAAICNPLLYPVIMTNRLCVRL) lie on the Cytoplasmic side of the membrane. Residues 145-165 (LALSFIGGFLHAVIHESFLSR) form a helical membrane-spanning segment. Over 166–198 (LTFCNSNIIYHFYCDVIPLLKISCTDPSLNYLI) the chain is Extracellular. The helical transmembrane segment at 199–219 (IFIFSGSIQVFTIMTVLISYT) threads the bilayer. The Cytoplasmic segment spans residues 220 to 239 (FVLFTILKKKSDKGIRKAFS). The chain crosses the membrane as a helical span at residues 240–260 (TCGAHLLSVSLYYGPLLFMYV). The Extracellular portion of the chain corresponds to 261 to 271 (HPASSEVDDQD). Residues 272-292 (MILSLFYTVIIPVLNPIIYSL) traverse the membrane as a helical segment. The Cytoplasmic portion of the chain corresponds to 293–309 (RNKQVIDSLKKMLKMMV).

Belongs to the G-protein coupled receptor 1 family.

Its subcellular location is the cell membrane. Potential odorant receptor. The polypeptide is Olfactory receptor 5H17 (Mus musculus (Mouse)).